Consider the following 360-residue polypeptide: Peptide chain release factor 1 (360 aa).

Position 237 is an N5-methylglutamine (Gln237).

The protein belongs to the prokaryotic/mitochondrial release factor family. In terms of processing, methylated by PrmC. Methylation increases the termination efficiency of RF1.

Its subcellular location is the cytoplasm. In terms of biological role, peptide chain release factor 1 directs the termination of translation in response to the peptide chain termination codons UAG and UAA. The polypeptide is Peptide chain release factor 1 (Pseudomonas fluorescens (strain SBW25)).